A 208-amino-acid chain; its full sequence is MPPSHSVAQIRDAERQTLATGRRLMPLAGAAAARHVAARIRPGAVVLALAGPGNNGGDALEAATGLRAMGHDVRVLLPSGAQGLPADAARAYAGWQAAGGETWSTLEPGFVPGLVIDGLFGIGLNRPLGADWQALVDTVNAWNVPVLALDVPSGIDADSGEALGRPIQARWTLSFIGRARGLERPGPGRDACGISEVDTLGVIMTPAN.

The YjeF N-terminal domain occupies 10–208 (IRDAERQTLA…TLGVIMTPAN (199 aa)). 54–58 (NNGGD) provides a ligand contact to (6S)-NADPHX. The K(+) site is built by N55 and D117. (6S)-NADPHX is bound by residues 121-127 (GIGLNRP) and D150. S153 provides a ligand contact to K(+).

The protein belongs to the NnrE/AIBP family. K(+) serves as cofactor.

It catalyses the reaction (6R)-NADHX = (6S)-NADHX. It carries out the reaction (6R)-NADPHX = (6S)-NADPHX. Catalyzes the epimerization of the S- and R-forms of NAD(P)HX, a damaged form of NAD(P)H that is a result of enzymatic or heat-dependent hydration. This is a prerequisite for the S-specific NAD(P)H-hydrate dehydratase to allow the repair of both epimers of NAD(P)HX. In Achromobacter xylosoxidans (strain A8), this protein is NAD(P)H-hydrate epimerase.